Reading from the N-terminus, the 632-residue chain is tRNA uridine 5-carboxymethylaminomethyl modification enzyme MnmG (632 aa).

Residues 13 to 18 (GGGHAG), Val-125, and Ser-180 each bind FAD. 273–287 (GPRYCPSIEDKVMRF) is a binding site for NAD(+). Gln-370 contacts FAD.

The protein belongs to the MnmG family. In terms of assembly, homodimer. Heterotetramer of two MnmE and two MnmG subunits. The cofactor is FAD.

It localises to the cytoplasm. NAD-binding protein involved in the addition of a carboxymethylaminomethyl (cmnm) group at the wobble position (U34) of certain tRNAs, forming tRNA-cmnm(5)s(2)U34. The chain is tRNA uridine 5-carboxymethylaminomethyl modification enzyme MnmG from Proteus mirabilis (strain HI4320).